A 377-amino-acid chain; its full sequence is MNAISSTSAVQTVHVPLGERAYDILIGPGLIARAGTEIASRLKGRKAAIITDENVAPLYLDALVASLDAAGIVSAEVVLPAGEKTKSFEHLITVCDKVLEARVERNDCVIALGGGVIGDLSGFAAGIVRRGVRFVQVPTSLLSQVDSSVGGKTGINSPRHGKNLIGVFHQPDLVLADTDVLNTLSEREFRAGYAEVAKYGLIDKPDFFTWLEANWRSVFTGGSARIEAIAASCQAKADVVVADERENGQRALLNLGHTFGHALEAATAYDSRRLVHGEGVSIGMVLAHEFSARMNLASPDDARRVERHLREVGLPTRMSEIAGELPPAEVLMEAIAQDKKVKSGKLTFILTRGIGQSFVADDVPASEVLSFLREKHP.

Residues 115–119, 139–140, Lys152, and Lys162 each bind NAD(+); these read GVIGD and TS. Residues Glu195, His257, and His276 each coordinate Zn(2+).

The protein belongs to the sugar phosphate cyclases superfamily. Dehydroquinate synthase family. The cofactor is Co(2+). Zn(2+) serves as cofactor. It depends on NAD(+) as a cofactor.

The protein localises to the cytoplasm. The enzyme catalyses 7-phospho-2-dehydro-3-deoxy-D-arabino-heptonate = 3-dehydroquinate + phosphate. The protein operates within metabolic intermediate biosynthesis; chorismate biosynthesis; chorismate from D-erythrose 4-phosphate and phosphoenolpyruvate: step 2/7. Its function is as follows. Catalyzes the conversion of 3-deoxy-D-arabino-heptulosonate 7-phosphate (DAHP) to dehydroquinate (DHQ). This Rhizobium etli (strain ATCC 51251 / DSM 11541 / JCM 21823 / NBRC 15573 / CFN 42) protein is 3-dehydroquinate synthase.